Consider the following 136-residue polypeptide: Protein NrdI (136 aa).

The protein belongs to the NrdI family.

Functionally, probably involved in ribonucleotide reductase function. This is Protein NrdI from Salmonella paratyphi B (strain ATCC BAA-1250 / SPB7).